Here is a 59-residue protein sequence, read N- to C-terminus: Antibacterial peptide enbocin (59 aa).

The N-terminal stretch at 1–20 (MNFTRIIFFLFVVVFATASG) is a signal peptide. A propeptide is located at residue K21. A Serine amide modification is found at S58.

This sequence belongs to the cecropin family.

The protein resides in the secreted. Its function is as follows. Has antibacterial activity against Gram-positive and Gram-negative bacteria. The chain is Antibacterial peptide enbocin from Bombyx mori (Silk moth).